Reading from the N-terminus, the 24-residue chain is Cytochrome c3-2 (24 aa).

Residues 1–24 (GNAPAADMVLKAPGDAKMTKTAVP) are disordered.

Binds 4 heme groups per subunit.

The protein localises to the periplasm. In terms of biological role, participates in sulfate respiration coupled with phosphorylation by transferring electrons from the enzyme dehydrogenase to ferredoxin. This chain is Cytochrome c3-2, found in Nitratidesulfovibrio vulgaris (Desulfovibrio vulgaris).